Consider the following 123-residue polypeptide: Ribosome-binding factor A (123 aa).

The protein belongs to the RbfA family. In terms of assembly, monomer. Binds 30S ribosomal subunits, but not 50S ribosomal subunits or 70S ribosomes.

It is found in the cytoplasm. One of several proteins that assist in the late maturation steps of the functional core of the 30S ribosomal subunit. Associates with free 30S ribosomal subunits (but not with 30S subunits that are part of 70S ribosomes or polysomes). Required for efficient processing of 16S rRNA. May interact with the 5'-terminal helix region of 16S rRNA. This Koribacter versatilis (strain Ellin345) protein is Ribosome-binding factor A.